The chain runs to 199 residues: ATP-dependent Clp protease proteolytic subunit (199 aa).

Catalysis depends on S102, which acts as the Nucleophile. Residue H127 is part of the active site.

The protein belongs to the peptidase S14 family. As to quaternary structure, fourteen ClpP subunits assemble into 2 heptameric rings which stack back to back to give a disk-like structure with a central cavity, resembling the structure of eukaryotic proteasomes.

The protein localises to the cytoplasm. The catalysed reaction is Hydrolysis of proteins to small peptides in the presence of ATP and magnesium. alpha-casein is the usual test substrate. In the absence of ATP, only oligopeptides shorter than five residues are hydrolyzed (such as succinyl-Leu-Tyr-|-NHMec, and Leu-Tyr-Leu-|-Tyr-Trp, in which cleavage of the -Tyr-|-Leu- and -Tyr-|-Trp bonds also occurs).. Functionally, cleaves peptides in various proteins in a process that requires ATP hydrolysis. Has a chymotrypsin-like activity. Plays a major role in the degradation of misfolded proteins. The chain is ATP-dependent Clp protease proteolytic subunit from Pseudothermotoga lettingae (strain ATCC BAA-301 / DSM 14385 / NBRC 107922 / TMO) (Thermotoga lettingae).